A 372-amino-acid polypeptide reads, in one-letter code: Probable NADH-dependent flavin oxidoreductase YqiG (372 aa).

Belongs to the NADH:flavin oxidoreductase/NADH oxidase family.

This Bacillus subtilis (strain 168) protein is Probable NADH-dependent flavin oxidoreductase YqiG (yqiG).